Consider the following 296-residue polypeptide: MFGAFVSHRLWSDSGCTTTCITNSIANYVAFGEQIGFPFKSAQVFIAGPRKAVINIQKDDKVELLKMIDKHNLWVVAHGTYLDVPWSRRSAFVTHFIQQELLICKEVGIKGLVLHLGAVEPELIVEGLKKIKPVEGVIIYLETPHNKHHTYKYSTIEQIKELFLRIRNTGLKQIGLCIDTAHIWSSGVNISSYNSARQWLRSLEDIHSVIPPSHIMFHLNDAATKCGSGVDRHASLFEGMIWKSYSHKIKHSGLYCFVEYITRHQCPAILERNLGSSMQLQTALTAEFNTLKSFLK.

An intrachain disulfide couples cysteine 16 to cysteine 20. Zn(2+) contacts are provided by histidine 78, histidine 115, glutamate 142, histidine 182, histidine 218, aspartate 231, histidine 233, and glutamate 271.

This sequence belongs to the AP endonuclease 2 family. Requires Zn(2+) as cofactor.

It is found in the host nucleus. The protein localises to the host cytoplasm. The protein resides in the virion. Its function is as follows. Endonuclease that plays a role in DNA repair. Cleaves phosphodiester bonds on the 5' side of apurinic or apyrimidinic sites (AP sites). In addition to endonuclease activity, the ASFV enzyme has a proofreading 3'-5' exonuclease activity that is considerably more efficient in the elimination of a mismatch than in that of a correctly paired base. Displays 3'-phosphatase and 3'-repair diesterase activities. The single nucleotide gaps generated by the AP endonuclease are filled by the viral AP endonuclease and DNA ligase. The sequence is that of Probable AP endonuclease from Ornithodoros (relapsing fever ticks).